The sequence spans 462 residues: SET domain-containing protein SmydA-8, isoform A (462 aa).

Positions 55-287 (PNWTISSSTV…KGGEITTTYT (233 aa)) constitute an SET domain.

Belongs to the class V-like SAM-binding methyltransferase superfamily.

The chain is SET domain-containing protein SmydA-8, isoform A from Drosophila melanogaster (Fruit fly).